The primary structure comprises 303 residues: Methionyl-tRNA formyltransferase (303 aa).

A (6S)-5,6,7,8-tetrahydrofolate-binding site is contributed by 110 to 113 (SLLP).

Belongs to the Fmt family.

It catalyses the reaction L-methionyl-tRNA(fMet) + (6R)-10-formyltetrahydrofolate = N-formyl-L-methionyl-tRNA(fMet) + (6S)-5,6,7,8-tetrahydrofolate + H(+). Attaches a formyl group to the free amino group of methionyl-tRNA(fMet). The formyl group appears to play a dual role in the initiator identity of N-formylmethionyl-tRNA by promoting its recognition by IF2 and preventing the misappropriation of this tRNA by the elongation apparatus. The chain is Methionyl-tRNA formyltransferase from Ehrlichia ruminantium (strain Welgevonden).